The following is a 485-amino-acid chain: Probable glycine dehydrogenase (decarboxylating) subunit 2 (485 aa).

Position 273 is an N6-(pyridoxal phosphate)lysine (Lys-273).

The protein belongs to the GcvP family. C-terminal subunit subfamily. The glycine cleavage system is composed of four proteins: P, T, L and H. In this organism, the P 'protein' is a heterodimer of two subunits. Requires pyridoxal 5'-phosphate as cofactor.

The catalysed reaction is N(6)-[(R)-lipoyl]-L-lysyl-[glycine-cleavage complex H protein] + glycine + H(+) = N(6)-[(R)-S(8)-aminomethyldihydrolipoyl]-L-lysyl-[glycine-cleavage complex H protein] + CO2. In terms of biological role, the glycine cleavage system catalyzes the degradation of glycine. The P protein binds the alpha-amino group of glycine through its pyridoxal phosphate cofactor; CO(2) is released and the remaining methylamine moiety is then transferred to the lipoamide cofactor of the H protein. This is Probable glycine dehydrogenase (decarboxylating) subunit 2 from Caldanaerobacter subterraneus subsp. tengcongensis (strain DSM 15242 / JCM 11007 / NBRC 100824 / MB4) (Thermoanaerobacter tengcongensis).